Consider the following 469-residue polypeptide: Calcium-binding mitochondrial carrier protein SCaMC-2 (469 aa).

Over 1-189 (MLCLCLYVPL…ERQTGMWWRH (189 aa)) the chain is Mitochondrial intermembrane. EF-hand domains are found at residues 47–80 (TYRQWKQKIVQAGDKDLDGQLDFEEFVHYLQDHE), 78–113 (DHEKKLRLVFKSLDKKNDGRIDAQEIMQSLRDLGVK), and 114–149 (ISEQQAEKILKSMDKNGTMTIDWNEWRDYHLLHPVE). Residues aspartate 60, aspartate 62, aspartate 64, glutamine 66, and glutamate 71 each contribute to the Ca(2+) site. 3 Solcar repeats span residues 184 to 270 (GMWW…IKRL), 278 to 363 (LRIH…LKNA), and 375 to 463 (PGVF…LKIT). The chain crosses the membrane as a helical span at residues 190–207 (LVAGGGAGAVSRTCTAPL). Over 208–244 (DRLKVLMQVHASRSNNMCIVGGFTQMIREGGARSLWR) the chain is Mitochondrial matrix. Residues 245–264 (GNGINVLKIAPESAIKFMAY) traverse the membrane as a helical segment. Over 265-287 (EQIKRLIGSDQETLRIHERLVAG) the chain is Mitochondrial intermembrane. A helical membrane pass occupies residues 288–301 (SLAGAIAQSSIYPM). The Mitochondrial matrix segment spans residues 302–337 (EVLKTRMALRKTGQYSGMLDCARKILAREGMAAFYK). The helical transmembrane segment at 338–357 (GYVPNMLGIIPYAGIDLAVY) threads the bilayer. Residues 358–380 (ETLKNAWLQRYAVNSADPGVFVL) lie on the Mitochondrial intermembrane side of the membrane. The chain crosses the membrane as a helical span at residues 381–398 (LACGTMSSTCGQLASYPL). Topologically, residues 399–437 (ALVRTRMQAQASMEGAPEVTMSSLFKQILRTEGAFGLYR) are mitochondrial matrix. The helical transmembrane segment at 438 to 457 (GLAPNFMKVIPAVSISYVVY) threads the bilayer. Residues 458–469 (ENLKITLGVQSR) lie on the Mitochondrial intermembrane side of the membrane.

It belongs to the mitochondrial carrier (TC 2.A.29) family.

It localises to the mitochondrion inner membrane. Calcium-dependent mitochondrial solute carrier. Mitochondrial solute carriers shuttle metabolites, nucleotides, and cofactors through the mitochondrial inner membrane. May act as a ATP-Mg/Pi exchanger that mediates the transport of Mg-ATP in exchange for phosphate, catalyzing the net uptake or efflux of adenine nucleotides into or from the mitochondria. The polypeptide is Calcium-binding mitochondrial carrier protein SCaMC-2 (SLC25A25) (Bos taurus (Bovine)).